The primary structure comprises 696 residues: Elongation factor G 2 (696 aa).

A tr-type G domain is found at 5–281 (SKYRNIGIFA…AVVDYLPSPT (277 aa)). Residues 14 to 21 (AHVDAGKT), 78 to 82 (DTPGH), and 132 to 135 (NKLD) each bind GTP.

This sequence belongs to the TRAFAC class translation factor GTPase superfamily. Classic translation factor GTPase family. EF-G/EF-2 subfamily.

It localises to the cytoplasm. Functionally, catalyzes the GTP-dependent ribosomal translocation step during translation elongation. During this step, the ribosome changes from the pre-translocational (PRE) to the post-translocational (POST) state as the newly formed A-site-bound peptidyl-tRNA and P-site-bound deacylated tRNA move to the P and E sites, respectively. Catalyzes the coordinated movement of the two tRNA molecules, the mRNA and conformational changes in the ribosome. In Vibrio parahaemolyticus serotype O3:K6 (strain RIMD 2210633), this protein is Elongation factor G 2.